Consider the following 765-residue polypeptide: Phosphoribosylformylglycinamidine synthase subunit PurL (765 aa).

H57 is a catalytic residue. ATP contacts are provided by Y60 and R104. Residue E106 coordinates Mg(2+). Substrate is bound by residues 107 to 110 (SHNH) and R129. The active-site Proton acceptor is the H108. Residue D130 participates in Mg(2+) binding. Q254 contacts substrate. D282 is a Mg(2+) binding site. Substrate is bound at residue 326-328 (ESQ). ATP is bound by residues N508 and G545. Residue N546 participates in Mg(2+) binding. S548 serves as a coordination point for substrate.

Belongs to the FGAMS family. As to quaternary structure, monomer. Part of the FGAM synthase complex composed of 1 PurL, 1 PurQ and 2 PurS subunits.

The protein localises to the cytoplasm. The catalysed reaction is N(2)-formyl-N(1)-(5-phospho-beta-D-ribosyl)glycinamide + L-glutamine + ATP + H2O = 2-formamido-N(1)-(5-O-phospho-beta-D-ribosyl)acetamidine + L-glutamate + ADP + phosphate + H(+). Its pathway is purine metabolism; IMP biosynthesis via de novo pathway; 5-amino-1-(5-phospho-D-ribosyl)imidazole from N(2)-formyl-N(1)-(5-phospho-D-ribosyl)glycinamide: step 1/2. In terms of biological role, part of the phosphoribosylformylglycinamidine synthase complex involved in the purines biosynthetic pathway. Catalyzes the ATP-dependent conversion of formylglycinamide ribonucleotide (FGAR) and glutamine to yield formylglycinamidine ribonucleotide (FGAM) and glutamate. The FGAM synthase complex is composed of three subunits. PurQ produces an ammonia molecule by converting glutamine to glutamate. PurL transfers the ammonia molecule to FGAR to form FGAM in an ATP-dependent manner. PurS interacts with PurQ and PurL and is thought to assist in the transfer of the ammonia molecule from PurQ to PurL. This is Phosphoribosylformylglycinamidine synthase subunit PurL from Corynebacterium aurimucosum (strain ATCC 700975 / DSM 44827 / CIP 107346 / CN-1) (Corynebacterium nigricans).